Consider the following 1758-residue polypeptide: uncharacterized protein (1758 aa).

A signal peptide spans 1–12; the sequence is MCFFLGSRLAYA. One can recognise an Autotransporter domain in the interval 1465-1758; that stretch reads ENLYNNGMWI…SFILGGNYYF (294 aa).

The protein resides in the cell outer membrane. This is an uncharacterized protein from Escherichia coli (strain K12).